The primary structure comprises 936 residues: Isoleucine--tRNA ligase (936 aa).

The 'HIGH' region signature appears at 58 to 68 (PYANGRAHLGT). Glutamate 561 is an L-isoleucyl-5'-AMP binding site. Residues 602 to 606 (KMSKS) carry the 'KMSKS' region motif. Position 605 (lysine 605) interacts with ATP. Zn(2+) contacts are provided by cysteine 899, cysteine 902, cysteine 919, and cysteine 922.

This sequence belongs to the class-I aminoacyl-tRNA synthetase family. IleS type 1 subfamily. As to quaternary structure, monomer. Requires Zn(2+) as cofactor.

It is found in the cytoplasm. The enzyme catalyses tRNA(Ile) + L-isoleucine + ATP = L-isoleucyl-tRNA(Ile) + AMP + diphosphate. Catalyzes the attachment of isoleucine to tRNA(Ile). As IleRS can inadvertently accommodate and process structurally similar amino acids such as valine, to avoid such errors it has two additional distinct tRNA(Ile)-dependent editing activities. One activity is designated as 'pretransfer' editing and involves the hydrolysis of activated Val-AMP. The other activity is designated 'posttransfer' editing and involves deacylation of mischarged Val-tRNA(Ile). The polypeptide is Isoleucine--tRNA ligase (Coxiella burnetii (strain Dugway 5J108-111)).